The following is a 358-amino-acid chain: Aurora kinase (358 aa).

The interval 1 to 49 (MENKATLARNIGEKRVSPRSKVNGTGKSWRISYSPQRMDGVSSGRNVSK) is disordered. Polar residues predominate over residues 20 to 35 (SKVNGTGKSWRISYSP). The region spanning 100–358 (FEVGRKLGKG…PWILKNKPFW (259 aa)) is the Protein kinase domain. ATP-binding positions include 106–114 (LGKGKFGKV) and K129. The active-site Proton acceptor is the D223.

It belongs to the protein kinase superfamily. Ser/Thr protein kinase family. Aurora subfamily.

Its subcellular location is the nucleus. The protein resides in the cytoplasm. The protein localises to the cytoskeleton. It is found in the spindle. It localises to the chromosome. Its subcellular location is the centromere. The protein resides in the kinetochore. The enzyme catalyses L-seryl-[protein] + ATP = O-phospho-L-seryl-[protein] + ADP + H(+). It catalyses the reaction L-threonyl-[protein] + ATP = O-phospho-L-threonyl-[protein] + ADP + H(+). In terms of biological role, component of the chromosomal passenger complex (CPC), a complex that acts as a key regulator of chromosome segregation and cytokinesis. Has a role in error-correction of aberrent kinetochore-microtubule attachments to ensure that sister kinetochores become bioriented and connect to opposite poles by promoting spindle assembly checkpoint signaling. The chain is Aurora kinase (IPL1) from Candida glabrata (strain ATCC 2001 / BCRC 20586 / JCM 3761 / NBRC 0622 / NRRL Y-65 / CBS 138) (Yeast).